A 457-amino-acid polypeptide reads, in one-letter code: BAG family molecular chaperone regulator 4 (457 aa).

The interval methionine 1–asparagine 101 is disordered. A Phosphoserine modification is found at serine 7. Positions glycine 8–tyrosine 20 are enriched in low complexity. Pro residues predominate over residues valine 30 to proline 47. An omega-N-methylarginine mark is found at arginine 40, arginine 53, and arginine 108. 3 disordered regions span residues tyrosine 113 to tyrosine 136, serine 166 to aspartate 333, and leucine 347 to proline 377. A compositionally biased stretch (polar residues) spans serine 166 to proline 182. An Omega-N-methylarginine modification is found at arginine 185. 2 stretches are compositionally biased toward low complexity: residues serine 274 to proline 284 and glutamine 294 to serine 308. 2 stretches are compositionally biased toward polar residues: residues glutamine 320–aspartate 333 and leucine 347–leucine 365. The BAG domain occupies serine 379–glycine 456.

As to quaternary structure, binds to the ATPase domain of HSP/HSC70 chaperones. Binds to the death domain of TNFRSF1A in the absence of TNF and thereby prevents binding of adapter molecules such as TRADD or TRAF2. Binds to the death domain of TNFRSF12. Interacts with PRKN. In terms of tissue distribution, ubiquitous.

Its subcellular location is the cytoplasm. Inhibits the chaperone activity of HSP70/HSC70 by promoting substrate release. Prevents constitutive TNFRSF1A signaling. Negative regulator of PRKN translocation to damaged mitochondria. This chain is BAG family molecular chaperone regulator 4 (BAG4), found in Homo sapiens (Human).